The following is a 1501-amino-acid chain: Inactive protein tyrosine kinase pTKL (1501 aa).

N64, N128, and N133 each carry an N-linked (GlcNAc...) asparagine glycan. Basic residues predominate over residues 204-221 (KKNKKNKKNKKKKNKKTK). The segment at 204-223 (KKNKKNKKNKKKKNKKTKNT) is disordered. N-linked (GlcNAc...) asparagine glycosylation is found at N239, N242, N258, and N327. The span at 257–273 (MNISLHEKNDKKNEKKN) shows a compositional bias: basic and acidic residues. Residues 257 to 276 (MNISLHEKNDKKNEKKNEKK) are disordered. In terms of domain architecture, SAM spans 301–366 (WSLREVIQWL…LQLIKNLQVM (66 aa)). Positions 392 to 425 (NKNIKKGKNIKKEKKKKKEKNIKKEKKKKKKETK) are disordered. The segment covering 394-424 (NIKKGKNIKKEKKKKKEKNIKKEKKKKKKET) has biased composition (basic residues). A coiled-coil region spans residues 399–433 (KNIKKEKKKKKEKNIKKEKKKKKKETKKFNNMDKK). 3 N-linked (GlcNAc...) asparagine glycosylation sites follow: N448, N463, and N471. Positions 483–486 (KVSF) match the RVxF motif 1 motif. The N-linked (GlcNAc...) asparagine glycan is linked to N506. A compositionally biased stretch (low complexity) spans 543 to 597 (QLSSPLSSPLSSPSPSSSPSSSPSSSPSSSPSSSPSPSSSPSPSSSPSSSPSSSP). Residues 543–607 (QLSSPLSSPL…SSPPSPLSYK (65 aa)) are disordered. N-linked (GlcNAc...) asparagine glycosylation is present at N652. The disordered stretch occupies residues 659 to 678 (IKKSKSKYNNDKKEQKKLPL). Positions 666–675 (YNNDKKEQKK) are enriched in basic and acidic residues. 5 N-linked (GlcNAc...) asparagine glycosylation sites follow: N681, N712, N737, N811, and N819. ATP is bound by residues 836–844 (QNINNFGKY) and K864. N-linked (GlcNAc...) asparagine glycosylation is found at N1024, N1031, N1074, and N1157. The 396-residue stretch at 1088–1483 (FHYQHNVLCG…HILKTISTLY (396 aa)) folds into the Protein kinase domain. The RVxF motif 2 motif lies at 1238 to 1241 (KVLF). An N-linked (GlcNAc...) asparagine glycan is attached at N1382.

This sequence belongs to the protein kinase superfamily. TKL Ser/Thr protein kinase family. In terms of assembly, interacts (via RVxF motif 1 and/or 2) with phosphatase PP1C. May interact (via SAM domain) with SERA5 (via C-terminus).

The protein resides in the parasitophorous vacuole. The protein localises to the host cell membrane. It is found in the host cytoplasm. Its subcellular location is the host cytoskeleton. The protein is Inactive protein tyrosine kinase pTKL of Plasmodium falciparum (isolate 3D7).